The chain runs to 491 residues: Glutamyl-tRNA(Gln) amidotransferase subunit A (491 aa).

Residues Lys77 and Ser152 each act as charge relay system in the active site. The Acyl-ester intermediate role is filled by Ser176.

Belongs to the amidase family. GatA subfamily. As to quaternary structure, heterotrimer of A, B and C subunits.

The catalysed reaction is L-glutamyl-tRNA(Gln) + L-glutamine + ATP + H2O = L-glutaminyl-tRNA(Gln) + L-glutamate + ADP + phosphate + H(+). Functionally, allows the formation of correctly charged Gln-tRNA(Gln) through the transamidation of misacylated Glu-tRNA(Gln) in organisms which lack glutaminyl-tRNA synthetase. The reaction takes place in the presence of glutamine and ATP through an activated gamma-phospho-Glu-tRNA(Gln). This Chlamydia abortus (strain DSM 27085 / S26/3) (Chlamydophila abortus) protein is Glutamyl-tRNA(Gln) amidotransferase subunit A.